Reading from the N-terminus, the 257-residue chain is NH(3)-dependent NAD(+) synthetase (257 aa).

Residue 28–35 (GISGGVDS) participates in ATP binding. Position 34 (D34) interacts with Mg(2+). R109 is a binding site for deamido-NAD(+). An ATP-binding site is contributed by T129. E134 contributes to the Mg(2+) binding site. Deamido-NAD(+) contacts are provided by K142 and D149. The ATP site is built by K158 and S180. 240–241 (HK) contributes to the deamido-NAD(+) binding site.

Belongs to the NAD synthetase family. As to quaternary structure, homodimer.

The enzyme catalyses deamido-NAD(+) + NH4(+) + ATP = AMP + diphosphate + NAD(+) + H(+). It functions in the pathway cofactor biosynthesis; NAD(+) biosynthesis; NAD(+) from deamido-NAD(+) (ammonia route): step 1/1. Catalyzes the ATP-dependent amidation of deamido-NAD to form NAD. Uses ammonia as a nitrogen source. The protein is NH(3)-dependent NAD(+) synthetase of Pyrococcus furiosus (strain ATCC 43587 / DSM 3638 / JCM 8422 / Vc1).